The chain runs to 92 residues: uncharacterized protein (92 aa).

This sequence belongs to the IUNH family.

This is an uncharacterized protein from Corynebacterium ammoniagenes (Brevibacterium ammoniagenes).